Consider the following 236-residue polypeptide: Ribose-5-phosphate isomerase A 2 (236 aa).

Substrate contacts are provided by residues 31–34 (SGTT), 86–89 (DGPD), and 99–102 (KGGG). Residue E108 is the Proton acceptor of the active site. A substrate-binding site is contributed by K126.

Belongs to the ribose 5-phosphate isomerase family. Homodimer.

It catalyses the reaction aldehydo-D-ribose 5-phosphate = D-ribulose 5-phosphate. It participates in carbohydrate degradation; pentose phosphate pathway; D-ribose 5-phosphate from D-ribulose 5-phosphate (non-oxidative stage): step 1/1. Functionally, catalyzes the reversible conversion of ribose-5-phosphate to ribulose 5-phosphate. The protein is Ribose-5-phosphate isomerase A 2 of Yersinia pestis.